A 166-amino-acid chain; its full sequence is EndA-like protein (166 aa).

Belongs to the tRNA-intron endonuclease family. Archaeal short subfamily.

The polypeptide is EndA-like protein (Methanopyrus kandleri (strain AV19 / DSM 6324 / JCM 9639 / NBRC 100938)).